A 419-amino-acid chain; its full sequence is Adenylosuccinate synthetase (419 aa).

GTP is bound by residues 15 to 21 and 43 to 45; these read GDEGKGK and GHT. Asp16 acts as the Proton acceptor in catalysis. Asp16 and Gly43 together coordinate Mg(2+). Residues 16-19, 41-44, Thr128, Arg142, Gln223, Thr238, and Arg302 each bind IMP; these read DEGK and NAGH. His44 (proton donor) is an active-site residue. Substrate is bound at residue 298–304; it reads TTTGRAR. GTP-binding positions include Arg304, 330-332, and 408-410; these read KLD and STS.

It belongs to the adenylosuccinate synthetase family. As to quaternary structure, homodimer. Mg(2+) is required as a cofactor.

It is found in the cytoplasm. The enzyme catalyses IMP + L-aspartate + GTP = N(6)-(1,2-dicarboxyethyl)-AMP + GDP + phosphate + 2 H(+). The protein operates within purine metabolism; AMP biosynthesis via de novo pathway; AMP from IMP: step 1/2. In terms of biological role, plays an important role in the de novo pathway of purine nucleotide biosynthesis. Catalyzes the first committed step in the biosynthesis of AMP from IMP. This is Adenylosuccinate synthetase from Sulfurimonas denitrificans (strain ATCC 33889 / DSM 1251) (Thiomicrospira denitrificans (strain ATCC 33889 / DSM 1251)).